The chain runs to 447 residues: UDP-N-acetylmuramoylalanine--D-glutamate ligase (447 aa).

112 to 118 is a binding site for ATP; the sequence is GTNGKST.

It belongs to the MurCDEF family.

Its subcellular location is the cytoplasm. It catalyses the reaction UDP-N-acetyl-alpha-D-muramoyl-L-alanine + D-glutamate + ATP = UDP-N-acetyl-alpha-D-muramoyl-L-alanyl-D-glutamate + ADP + phosphate + H(+). It participates in cell wall biogenesis; peptidoglycan biosynthesis. Its function is as follows. Cell wall formation. Catalyzes the addition of glutamate to the nucleotide precursor UDP-N-acetylmuramoyl-L-alanine (UMA). In Legionella pneumophila (strain Paris), this protein is UDP-N-acetylmuramoylalanine--D-glutamate ligase.